A 215-amino-acid polypeptide reads, in one-letter code: CASP-like protein UU3 (215 aa).

Topologically, residues 1 to 44 are cytoplasmic; sequence MATAWESEYFDKVTPGERERAVPPMVPQQTPPPVYIQPQVSRNG. A helical membrane pass occupies residues 45–65; sequence IVASIVLRLLTLIFAVVALAV. The Extracellular portion of the chain corresponds to 66–93; that stretch reads LASNTGSFQVSTGSATSVKTIKFTILSA. A helical membrane pass occupies residues 94-114; that stretch reads FTYLFAVCGVVAVYSLLLIIV. Topologically, residues 115-128 are cytoplasmic; the sequence is EMIDLAVRGFTTHT. Residues 129 to 149 form a helical membrane-spanning segment; it reads LVAIFVFVLDQTMAYVLISAA. The Extracellular portion of the chain corresponds to 150 to 185; the sequence is SASANGVKVSRDESNITGYKFDISCSNLGIDDYCTK. N164 is a glycosylation site (N-linked (GlcNAc...) asparagine). A helical membrane pass occupies residues 186–206; that stretch reads ASASVAIAFIAFLFMAITAGV. Topologically, residues 207–215 are cytoplasmic; sequence SARRLFKLP.

The protein belongs to the Casparian strip membrane proteins (CASP) family. In terms of assembly, homodimer and heterodimers.

It is found in the cell membrane. In Physcomitrium patens (Spreading-leaved earth moss), this protein is CASP-like protein UU3.